The primary structure comprises 358 residues: Probable G-protein coupled receptor 25 (358 aa).

The Extracellular segment spans residues methionine 1–proline 43. A helical transmembrane segment spans residues alanine 44–leucine 64. At serine 65–threonine 76 the chain is on the cytoplasmic side. A helical transmembrane segment spans residues phenylalanine 77–alanine 97. Residues alanine 98–lysine 113 are Extracellular-facing. Cysteine 112 and cysteine 191 form a disulfide bridge. A helical membrane pass occupies residues valine 114–serine 134. Over valine 135–cysteine 155 the chain is Cytoplasmic. Residues valine 156–leucine 176 traverse the membrane as a helical segment. Residues tyrosine 177–glutamine 200 are Extracellular-facing. The chain crosses the membrane as a helical span at residues glycine 201–cysteine 221. Residues tyrosine 222–serine 239 are Cytoplasmic-facing. A helical transmembrane segment spans residues leucine 240 to leucine 260. Residues arginine 261–tryptophan 284 are Extracellular-facing. Residues glycine 285–leucine 307 form a helical membrane-spanning segment. The Cytoplasmic segment spans residues aspartate 308–tryptophan 358. The segment at aspartate 339 to tryptophan 358 is disordered.

Belongs to the G-protein coupled receptor 1 family.

It is found in the membrane. Its function is as follows. Orphan receptor. The sequence is that of Probable G-protein coupled receptor 25 (Gpr25) from Mus musculus (Mouse).